We begin with the raw amino-acid sequence, 155 residues long: SsrA-binding protein (155 aa).

The protein belongs to the SmpB family.

The protein resides in the cytoplasm. Functionally, required for rescue of stalled ribosomes mediated by trans-translation. Binds to transfer-messenger RNA (tmRNA), required for stable association of tmRNA with ribosomes. tmRNA and SmpB together mimic tRNA shape, replacing the anticodon stem-loop with SmpB. tmRNA is encoded by the ssrA gene; the 2 termini fold to resemble tRNA(Ala) and it encodes a 'tag peptide', a short internal open reading frame. During trans-translation Ala-aminoacylated tmRNA acts like a tRNA, entering the A-site of stalled ribosomes, displacing the stalled mRNA. The ribosome then switches to translate the ORF on the tmRNA; the nascent peptide is terminated with the 'tag peptide' encoded by the tmRNA and targeted for degradation. The ribosome is freed to recommence translation, which seems to be the essential function of trans-translation. The protein is SsrA-binding protein of Oenococcus oeni (strain ATCC BAA-331 / PSU-1).